The primary structure comprises 479 residues: Flotillin-like protein 3 (479 aa).

A lipid anchor (S-palmitoyl cysteine) is attached at C36. Coiled-coil stretches lie at residues K227–A251 and E306–E326.

Belongs to the band 7/mec-2 family. Flotillin subfamily. May be palmitoylated.

Its subcellular location is the cell membrane. The protein localises to the membrane. It localises to the caveola. Its function is as follows. May act as a scaffolding protein within caveolar membranes, functionally participating in formation of caveolae or caveolae-like vesicles. The chain is Flotillin-like protein 3 (FLOT3) from Arabidopsis thaliana (Mouse-ear cress).